A 482-amino-acid polypeptide reads, in one-letter code: Protein trichome birefringence-like 15 (482 aa).

A helical; Signal-anchor for type II membrane protein membrane pass occupies residues glycine 109–alanine 129. A GDS motif motif is present at residues glycine 217–serine 219. Positions aspartate 461–asparagine 475 match the DCXHWCLPGXXDXWN motif motif.

It belongs to the PC-esterase family. TBL subfamily.

It localises to the membrane. Its function is as follows. May act as a bridging protein that binds pectin and other cell wall polysaccharides. Probably involved in maintaining esterification of pectins. May be involved in the specific O-acetylation of cell wall polymers. The protein is Protein trichome birefringence-like 15 (TBL15) of Arabidopsis thaliana (Mouse-ear cress).